The following is a 111-amino-acid chain: Iron-sulfur cluster insertion protein ErpA (111 aa).

The iron-sulfur cluster site is built by cysteine 39, cysteine 103, and cysteine 105.

Belongs to the HesB/IscA family. In terms of assembly, homodimer. Requires iron-sulfur cluster as cofactor.

Functionally, required for insertion of 4Fe-4S clusters for at least IspG. This Acinetobacter baumannii (strain SDF) protein is Iron-sulfur cluster insertion protein ErpA.